We begin with the raw amino-acid sequence, 268 residues long: Tryptophan synthase alpha chain (268 aa).

Residues E49 and D60 each act as proton acceptor in the active site.

It belongs to the TrpA family. As to quaternary structure, tetramer of two alpha and two beta chains.

The catalysed reaction is (1S,2R)-1-C-(indol-3-yl)glycerol 3-phosphate + L-serine = D-glyceraldehyde 3-phosphate + L-tryptophan + H2O. Its pathway is amino-acid biosynthesis; L-tryptophan biosynthesis; L-tryptophan from chorismate: step 5/5. Its function is as follows. The alpha subunit is responsible for the aldol cleavage of indoleglycerol phosphate to indole and glyceraldehyde 3-phosphate. This is Tryptophan synthase alpha chain from Xylella fastidiosa (strain 9a5c).